We begin with the raw amino-acid sequence, 344 residues long: Uroporphyrinogen decarboxylase (344 aa).

Residues 25–29, Asp75, Tyr152, Ser207, and His323 each bind substrate; that span reads RQAGR.

This sequence belongs to the uroporphyrinogen decarboxylase family. Homodimer.

The protein resides in the cytoplasm. The enzyme catalyses uroporphyrinogen III + 4 H(+) = coproporphyrinogen III + 4 CO2. It functions in the pathway porphyrin-containing compound metabolism; protoporphyrin-IX biosynthesis; coproporphyrinogen-III from 5-aminolevulinate: step 4/4. Its function is as follows. Catalyzes the decarboxylation of four acetate groups of uroporphyrinogen-III to yield coproporphyrinogen-III. The sequence is that of Uroporphyrinogen decarboxylase from Ruegeria pomeroyi (strain ATCC 700808 / DSM 15171 / DSS-3) (Silicibacter pomeroyi).